The sequence spans 458 residues: Ammonium transporter Rh type B (458 aa).

The Cytoplasmic portion of the chain corresponds to 1-13; sequence MAGSSRRAGGRRL. The helical transmembrane segment at 14-34 threads the bilayer; it reads QLPLLCLLLQGATAILFAVFV. Topologically, residues 35-61 are extracellular; the sequence is RYNHETDAALWHWGNHSNPDNEFYFRY. The N-linked (GlcNAc...) asparagine glycan is linked to N49. A helical transmembrane segment spans residues 62–82; that stretch reads PSFQDVHTMIFVGFGFLMAFL. Residues 83–86 lie on the Cytoplasmic side of the membrane; the sequence is QRYG. A helical transmembrane segment spans residues 87 to 107; it reads FSSVGFTFLLAAFALQWSTLV. Topologically, residues 108-124 are extracellular; sequence QGFLHTFHGGHIHIGVE. The helical transmembrane segment at 125-145 threads the bilayer; that stretch reads SMINADFCAGAVLISFGAILG. The Cytoplasmic portion of the chain corresponds to 146-149; sequence KTGP. The chain crosses the membrane as a helical span at residues 150-170; the sequence is AQLLLMALLEVVLFGLNEFVL. At 171–178 the chain is on the extracellular side; the sequence is LSLLGVKD. A helical membrane pass occupies residues 179-201; it reads AGGSMTIHTFGAYFGLVLSRVLY. The Cytoplasmic segment spans residues 202-219; sequence RPQLEKSKHRQSSVYHSD. Residues 220 to 240 traverse the membrane as a helical segment; that stretch reads LFAMIGTIFLWIFWPSFNSAP. The Extracellular segment spans residues 241–251; that stretch reads TPLGDGQHRTA. The chain crosses the membrane as a helical span at residues 252–272; sequence LNTYYSLTASTLSTFALSALV. Topologically, residues 273-282 are cytoplasmic; that stretch reads GRDGRLDMVH. Residues 283–303 traverse the membrane as a helical segment; sequence VQNAALAGGVVVGTSAEMMLT. P304 is a topological domain (extracellular). A helical membrane pass occupies residues 305-325; it reads FGALAAGFLAGTVSTLGFKFF. The Cytoplasmic portion of the chain corresponds to 326-346; the sequence is TPILESKFKIQDTCGVHNLHG. Residues 347–367 form a helical membrane-spanning segment; that stretch reads MPGVLGALLGVLVAGLATHDS. At 368–393 the chain is on the extracellular side; the sequence is YGEGLESVFPLIAEGQRSSTSQALHQ. Residues 394 to 414 form a helical membrane-spanning segment; it reads LFGLFVTLIFASVGGGLGGLL. Over 415–458 the chain is Cytoplasmic; it reads LRLPFLDSPPDSQCYEDQIYWEVPEEHADLAQGSLRPEEPDTQA. The segment at 416-424 is interaction with ANK3; that stretch reads RLPFLDSPP. The Basolateral sorting signal signature appears at 429-432; it reads YEDQ.

It belongs to the ammonium transporter (TC 2.A.49) family. Rh subfamily. As to quaternary structure, interacts (via C-terminus) with ANK2 and ANK3; required for targeting to the basolateral membrane. Post-translationally, N-glycosylated.

It is found in the cell membrane. The protein localises to the basolateral cell membrane. The catalysed reaction is NH4(+)(in) = NH4(+)(out). The enzyme catalyses methylamine(out) = methylamine(in). It carries out the reaction CO2(out) = CO2(in). Ammonium transporter involved in the maintenance of acid-base homeostasis. Transports ammonium and its related derivative methylammonium across the basolateral plasma membrane of epithelial cells likely contributing to renal transepithelial ammonia transport and ammonia metabolism. May transport either NH4(+) or NH3 ammonia species predominantly mediating an electrogenic NH4(+) transport. May act as a CO2 channel providing for renal acid secretion. This is Ammonium transporter Rh type B (RHBG) from Sus scrofa (Pig).